The following is a 128-amino-acid chain: Small ribosomal subunit protein uS11 (128 aa).

This sequence belongs to the universal ribosomal protein uS11 family. Part of the 30S ribosomal subunit. Interacts with proteins S7 and S18. Binds to IF-3.

Located on the platform of the 30S subunit, it bridges several disparate RNA helices of the 16S rRNA. Forms part of the Shine-Dalgarno cleft in the 70S ribosome. The sequence is that of Small ribosomal subunit protein uS11 from Desulfatibacillum aliphaticivorans.